The sequence spans 1462 residues: MGARASVLRGDKLDTWESIRLKSRGRKKYLIKHLVWAGSELQRFAMNPGLMENVEGCWKIILQLQPSVDIGSPEIISLFNTICVLYCVHAGERVQDTEEAVKIVKMKLTVQKNNSTATSSGQRQNAGEKEETVPPSGNTGNTGRATETPSGSRLYPVITDAQGVARHQPISPRTLNAWVRVIEEKGFNPEVIPMFSALSEGATPYDLNSMLNAVGEHQAAMQMLKEVINEEAAEWDRAHPAHAGPQQAGMLREPTGADIAGTTSTLQEQVLWMTTPQAQGGVPVGDIYKRWIILGLNKLVRMYSPVSILDIKQGPKEPFRDYVDRFYKTIRAEQASQPVKTWMTETLLVQNANPDCKHILKALGQGATLEEMLTACQGVGGPSHKAKILAEAMASATAGGVNMLQGGKRPPLKKGQLQCFNCGKVGHTARNCRAPRKKGCWRCGQEGHQMKDCTTRNNSTGVNFFRETHPLVGVQTRELCAEHPREREGSGAGDSTDTSGANCPTTGDDDERRVLPQVNLWQRPMMTVKVQGQVCQALLDTGADDSVFCNIKLKGQWTPKTIGGIGGFVPVSEYYNIPVQIGNKEVRATVLVGETPINIIGRNILKQLGCTLNFPISPIEVVKVQLKEGMDGPKVKQWPLSKEKIEALTEICKTLEKEGKISAVGPENPYNTPIFAIKKKDTSKWRKLVDFRELNKRTQDFWELQLGIPHPAGLRKRNMVTVLDVGDAYFSIPLDPDFRKYTAFTIPSLNNNTPGKRFQYNVLPQGWKGSPAIFQSSMTKILDPFRKEHPDVDIYQYMDDLYIGSDLNEEEHRKLIKKLRQHLLTWGLETPDKKYQEKPPFMWMGYELHPNKWTVQNITLPEPEQWTVNHIQKLVGKLNWASQIYHGIKTKELCKLIRGVKGLTEPVEMTREAELELEENKQILKEKVQGAYYDPKLPLQAAIQKQGQGQWTYQIYQEEGKNLKTGKYAKSPGTHTNEIRQLAGLIQKIGNESIIIWGIVPKFLLPVSKETWSQWWTDYWQVTWVPEWEFINTPPLIRLWYNLLSDPIPEAETFYVDGAANRDSKKGRAGYVTNRGRYRSKDLENTTNQQAELWAVDLALKDSGAQVNIVTDSQYVMGVLQGLPDQSDSPIVEQIIQKLTQKTAIYLAWVPAHKGIGGNEEVDKLVSKNIRKILFLDGINEAQEDHDKYHSNWKALADEYNLPPVVAKEIIAQCPKCHIKGEAIHGQVDYSPEIWQIDCTHLEGKVIIVAVHVASGFIEAEVIPEETGRETAYFILKLAGRWPVKKIHTDNGPNFTSTAVKAACWWAQIQHEFGIPYNPQSQGVVESMNKQLKQIIEQVRDQAEQLRTAVIMAVYIHNFKRKGGIGEYTAGERLLDILTTNIQTKQLQKQILKVQNFRVYYRDARDPIWKGPARLLWKGEGAVVIKEGEDIKVVPRRKAKIIKEYGKQMAGAGGMDDRQNET.

Gly-2 carries the N-myristoyl glycine; by host lipid modification. Residues 16-22 (WESIRLK) carry the Nuclear export signal motif. Residues 26–32 (RKKYLIK) carry the Nuclear localization signal motif. Polar residues-rich tracts occupy residues 113 to 125 (NNST…QRQN) and 135 to 151 (PSGN…TPSG). Residues 113-153 (NNSTATSSGQRQNAGEKEETVPPSGNTGNTGRATETPSGSR) form a disordered region. Tyr-155 is subject to Phosphotyrosine; by host. 2 consecutive CCHC-type zinc fingers follow at residues 417–434 (LQCF…NCRA) and 438–455 (KGCW…DCTT). Residues 482 to 513 (EHPREREGSGAGDSTDTSGANCPTTGDDDERR) are disordered. In terms of domain architecture, Peptidase A2 spans 535 to 604 (CQALLDTGAD…TPINIIGRNI (70 aa)). The active-site For protease activity; shared with dimeric partner is the Asp-540. The Reverse transcriptase domain maps to 658–848 (EGKISAVGPE…PPFMWMGYEL (191 aa)). The Mg(2+) site is built by Asp-724, Asp-799, and Asp-800. Residues 841 to 849 (FMWMGYELH) form an RT 'primer grip' region. Positions 1012–1028 (WSQWWTDYWQVTWVPEW) match the Tryptophan repeat motif motif. The RNase H type-1 domain occupies 1048-1171 (IPEAETFYVD…VDKLVSKNIR (124 aa)). Mg(2+)-binding residues include Asp-1057, Glu-1092, Asp-1112, and Asp-1163. An Integrase-type zinc finger spans residues 1177–1218 (DGINEAQEDHDKYHSNWKALADEYNLPPVVAKEIIAQCPKCH). His-1186, His-1190, Cys-1214, and Cys-1217 together coordinate Zn(2+). In terms of domain architecture, Integrase catalytic spans 1228 to 1378 (VDYSPEIWQI…TAGERLLDIL (151 aa)). The Mg(2+) site is built by Asp-1238 and Asp-1290. A DNA-binding region (integrase-type) is located at residues 1397–1444 (FRVYYRDARDPIWKGPARLLWKGEGAVVIKEGEDIKVVPRRKAKIIKE).

In terms of assembly, homotrimer. Interacts with gp41 (via C-terminus). Homodimer. The active site consists of two apposed aspartic acid residues. As to quaternary structure, heterodimer of p66 RT and p51 RT (RT p66/p51). Heterodimerization of RT is essential for DNA polymerase activity. Despite the sequence identities, p66 RT and p51 RT have distinct folding. In terms of assembly, homotetramer; may further associate as a homohexadecamer. It depends on Mg(2+) as a cofactor. In terms of processing, specific enzymatic cleavages by the viral protease yield mature proteins. The protease is released by autocatalytic cleavage. The polyprotein is cleaved during and after budding, this process is termed maturation. Proteolytic cleavage of p66 RT removes the RNase H domain to yield the p51 RT subunit. Post-translationally, capsid protein p24 is phosphorylated.

The protein resides in the virion. It localises to the host nucleus. It is found in the host cytoplasm. The protein localises to the host cell membrane. It carries out the reaction Specific for a P1 residue that is hydrophobic, and P1' variable, but often Pro.. The catalysed reaction is Endohydrolysis of RNA in RNA/DNA hybrids. Three different cleavage modes: 1. sequence-specific internal cleavage of RNA. Human immunodeficiency virus type 1 and Moloney murine leukemia virus enzymes prefer to cleave the RNA strand one nucleotide away from the RNA-DNA junction. 2. RNA 5'-end directed cleavage 13-19 nucleotides from the RNA end. 3. DNA 3'-end directed cleavage 15-20 nucleotides away from the primer terminus.. It catalyses the reaction 3'-end directed exonucleolytic cleavage of viral RNA-DNA hybrid.. The enzyme catalyses DNA(n) + a 2'-deoxyribonucleoside 5'-triphosphate = DNA(n+1) + diphosphate. Its activity is regulated as follows. The viral protease is inhibited by many synthetic protease inhibitors (PIs), such as amprenavir, atazanavir, indinavir, loprinavir, nelfinavir, ritonavir and saquinavir. RT can be inhibited either by nucleoside RT inhibitors (NRTIs) or by non nucleoside RT inhibitors (NNRTIs). NRTIs act as chain terminators, whereas NNRTIs inhibit DNA polymerization by binding a small hydrophobic pocket near the RT active site and inducing an allosteric change in this region. Classical NRTIs are abacavir, adefovir (PMEA), didanosine (ddI), lamivudine (3TC), stavudine (d4T), tenofovir (PMPA), zalcitabine (ddC), and zidovudine (AZT). Classical NNRTIs are atevirdine (BHAP U-87201E), delavirdine, efavirenz (DMP-266), emivirine (I-EBU), and nevirapine (BI-RG-587). The tritherapies used as a basic effective treatment of AIDS associate two NRTIs and one NNRTI. Use of protease inhibitors in tritherapy regimens permit more ambitious therapeutic strategies. In terms of biological role, gag-Pol polyprotein and Gag polyprotein may regulate their own translation, by the binding genomic RNA in the 5'-UTR. At low concentration, Gag-Pol and Gag would promote translation, whereas at high concentration, the polyproteins encapsidate genomic RNA and then shut off translation. Its function is as follows. Matrix protein p17 has two main functions: in infected cell, it targets Gag and Gag-pol polyproteins to the plasma membrane via a multipartite membrane-binding signal, that includes its myristointegration complex. The myristoylation signal and the NLS exert conflicting influences its subcellular localization. The key regulation of these motifs might be phosphorylation of a portion of MA molecules on the C-terminal tyrosine at the time of virus maturation, by virion-associated cellular tyrosine kinase. Implicated in the release from host cell mediated by Vpu. Functionally, capsid protein p24 forms the conical core that encapsulates the genomic RNA-nucleocapsid complex in the virion. The core is constituted by capsid protein hexamer subunits. The core is disassembled soon after virion entry. Interaction with host PPIA/CYPA protects the virus from restriction by host TRIM5-alpha and from an unknown antiviral activity in host cells. This capsid restriction by TRIM5 is one of the factors which restricts SIV to the simian species. Nucleocapsid protein p7 encapsulates and protects viral dimeric unspliced (genomic) RNA. Binds these RNAs through its zinc fingers. Facilitates rearangement of nucleic acid secondary structure during retrotranscription of genomic RNA. This capability is referred to as nucleic acid chaperone activity. In terms of biological role, the aspartyl protease mediates proteolytic cleavages of Gag and Gag-Pol polyproteins during or shortly after the release of the virion from the plasma membrane. Cleavages take place as an ordered, step-wise cascade to yield mature proteins. This process is called maturation. Displays maximal activity during the budding process just prior to particle release from the cell. Also cleaves Nef and Vif, probably concomitantly with viral structural proteins on maturation of virus particles. Hydrolyzes host EIF4GI and PABP1 in order to shut off the capped cellular mRNA translation. The resulting inhibition of cellular protein synthesis serves to ensure maximal viral gene expression and to evade host immune response. Its function is as follows. Reverse transcriptase/ribonuclease H (RT) is a multifunctional enzyme that converts the viral dimeric RNA genome into dsDNA in the cytoplasm, shortly after virus entry into the cell. This enzyme displays a DNA polymerase activity that can copy either DNA or RNA templates, and a ribonuclease H (RNase H) activity that cleaves the RNA strand of RNA-DNA heteroduplexes in a partially processive 3' to 5' endonucleasic mode. Conversion of viral genomic RNA into dsDNA requires many steps. A tRNA binds to the primer-binding site (PBS) situated at the 5'-end of the viral RNA. RT uses the 3' end of the tRNA primer to perform a short round of RNA-dependent minus-strand DNA synthesis. The reading proceeds through the U5 region and ends after the repeated (R) region which is present at both ends of viral RNA. The portion of the RNA-DNA heteroduplex is digested by the RNase H, resulting in a ssDNA product attached to the tRNA primer. This ssDNA/tRNA hybridizes with the identical R region situated at the 3' end of viral RNA. This template exchange, known as minus-strand DNA strong stop transfer, can be either intra- or intermolecular. RT uses the 3' end of this newly synthesized short ssDNA to perform the RNA-dependent minus-strand DNA synthesis of the whole template. RNase H digests the RNA template except for two polypurine tracts (PPTs) situated at the 5'-end and near the center of the genome. It is not clear if both polymerase and RNase H activities are simultaneous. RNase H can probably proceed both in a polymerase-dependent (RNA cut into small fragments by the same RT performing DNA synthesis) and a polymerase-independent mode (cleavage of remaining RNA fragments by free RTs). Secondly, RT performs DNA-directed plus-strand DNA synthesis using the PPTs that have not been removed by RNase H as primers. PPTs and tRNA primers are then removed by RNase H. The 3' and 5' ssDNA PBS regions hybridize to form a circular dsDNA intermediate. Strand displacement synthesis by RT to the PBS and PPT ends produces a blunt ended, linear dsDNA copy of the viral genome that includes long terminal repeats (LTRs) at both ends. Functionally, integrase catalyzes viral DNA integration into the host chromosome, by performing a series of DNA cutting and joining reactions. This enzyme activity takes place after virion entry into a cell and reverse transcription of the RNA genome in dsDNA. The first step in the integration process is 3' processing. This step requires a complex comprising the viral genome, matrix protein, Vpr and integrase. This complex is called the pre-integration complex (PIC). The integrase protein removes 2 nucleotides from each 3' end of the viral DNA, leaving recessed CA OH's at the 3' ends. In the second step, the PIC enters cell nucleus. This process is mediated through integrase and Vpr proteins, and allows the virus to infect a non dividing cell. This ability to enter the nucleus is specific of lentiviruses, other retroviruses cannot and rely on cell division to access cell chromosomes. In the third step, termed strand transfer, the integrase protein joins the previously processed 3' ends to the 5' ends of strands of target cellular DNA at the site of integration. The 5'-ends are produced by integrase-catalyzed staggered cuts, 5 bp apart. A Y-shaped, gapped, recombination intermediate results, with the 5'-ends of the viral DNA strands and the 3' ends of target DNA strands remaining unjoined, flanking a gap of 5 bp. The last step is viral DNA integration into host chromosome. This involves host DNA repair synthesis in which the 5 bp gaps between the unjoined strands are filled in and then ligated. Since this process occurs at both cuts flanking the SIV genome, a 5 bp duplication of host DNA is produced at the ends of SIV integration. Alternatively, Integrase may catalyze the excision of viral DNA just after strand transfer, this is termed disintegration. The chain is Gag-Pol polyprotein (gag-pol) from Simian immunodeficiency virus (isolate TAN1) (SIV-cpz).